The following is a 408-amino-acid chain: Neutral cholesterol ester hydrolase 1 (408 aa).

The Cytoplasmic portion of the chain corresponds to 1–4; it reads MRSS. Residues 5 to 25 form a helical; Signal-anchor for type II membrane protein membrane-spanning segment; it reads CVLLAALLALAAYYVYIPLPS. Residues 26–408 lie on the Lumenal side of the membrane; that stretch reads AVSDPWKLML…SYIKWLDQNL (383 aa). Residues 113–115 carry the Involved in the stabilization of the negatively charged intermediate by the formation of the oxyanion hole motif; the sequence is HGG. Residue serine 191 is part of the active site. Asparagine 270 carries an N-linked (GlcNAc...) asparagine glycan. The active site involves aspartate 348. An N-linked (GlcNAc...) asparagine glycan is attached at asparagine 367. Histidine 378 is an active-site residue. Asparagine 389 carries N-linked (GlcNAc...) asparagine glycosylation.

Belongs to the 'GDXG' lipolytic enzyme family. N-glycosylated. Present in brain, heart, kidney, lung, spinal cord and testis but not liver (at protein level). Expressed in peritoneal macrophages and kidney.

Its subcellular location is the cell membrane. The protein localises to the microsome. The catalysed reaction is a 1-O-alkyl-2-acetyl-sn-glycerol + H2O = a 1-O-alkyl-sn-glycerol + acetate + H(+). The enzyme catalyses 1-O-hexadecyl-2-acetyl-sn-glycerol + H2O = 1-O-hexadecyl-sn-glycerol + acetate + H(+). It carries out the reaction a cholesterol ester + H2O = cholesterol + a fatty acid + H(+). It catalyses the reaction cholesteryl (9Z-octadecenoate) + H2O = cholesterol + (9Z)-octadecenoate + H(+). Its activity is regulated as follows. Inhibited by bulky trifluoromethyl ketones. Functionally, hydrolyzes 2-acetyl monoalkylglycerol ether (1-O-alkyl-2-acetyl-sn-glycerol), the penultimate precursor of the pathway for de novo synthesis of platelet-activating factor. May be responsible for the hydrolysis of cholesterol esters (such as cholesteryl (9Z-octadecenoate)) in macrophages. Also involved in organ detoxification by hydrolyzing exogenous organophosphorus compounds. This Mus musculus (Mouse) protein is Neutral cholesterol ester hydrolase 1 (Nceh1).